The following is a 217-amino-acid chain: 3,4-dihydroxy-2-butanone 4-phosphate synthase (217 aa).

D-ribulose 5-phosphate is bound by residues 37-38, D42, 150-154, and E174; these read RE and RRGHT. E38 provides a ligand contact to Mg(2+). Residue H153 participates in Mg(2+) binding.

The protein belongs to the DHBP synthase family. In terms of assembly, homodimer. The cofactor is Mg(2+). It depends on Mn(2+) as a cofactor.

The enzyme catalyses D-ribulose 5-phosphate = (2S)-2-hydroxy-3-oxobutyl phosphate + formate + H(+). It participates in cofactor biosynthesis; riboflavin biosynthesis; 2-hydroxy-3-oxobutyl phosphate from D-ribulose 5-phosphate: step 1/1. Functionally, catalyzes the conversion of D-ribulose 5-phosphate to formate and 3,4-dihydroxy-2-butanone 4-phosphate. The chain is 3,4-dihydroxy-2-butanone 4-phosphate synthase from Pseudoalteromonas translucida (strain TAC 125).